The sequence spans 233 residues: Putative T-box protein 41 (233 aa).

Positions 1-146 form a DNA-binding region, T-box; that stretch reads MTVTRNGCRI…MNPHARHFLK (146 aa).

The protein localises to the nucleus. The chain is Putative T-box protein 41 (tbx-41) from Caenorhabditis elegans.